The primary structure comprises 253 residues: DNA repair protein RecO (253 aa).

This sequence belongs to the RecO family.

Involved in DNA repair and RecF pathway recombination. This chain is DNA repair protein RecO, found in Pediococcus pentosaceus (strain ATCC 25745 / CCUG 21536 / LMG 10740 / 183-1w).